The chain runs to 411 residues: Copper resistance protein CRF1 (411 aa).

Residues 1–40 constitute a DNA-binding region (copper-fist); that stretch reads MVVIEGIKYACERCIRGHRVSSCTHTQQPLIRIKPKGRPA. Positions 11, 14, 23, and 25 each coordinate Zn(2+). Low complexity-rich tracts occupy residues 115-190, 205-214, 227-241, and 350-370; these read QQQA…PHSP, SSSSLSSLHS, SHNS…ANSP, and SVAA…PPSS. 2 disordered regions span residues 115–241 and 348–389; these read QQQA…ANSP and EMSV…VSPA.

The protein resides in the nucleus. In terms of biological role, transcriptional regulator involved in resistance to high copper concentration. This Yarrowia lipolytica (strain CLIB 122 / E 150) (Yeast) protein is Copper resistance protein CRF1 (CRF1).